Here is a 127-residue protein sequence, read N- to C-terminus: Large ribosomal subunit protein bL17 (127 aa).

Belongs to the bacterial ribosomal protein bL17 family. As to quaternary structure, part of the 50S ribosomal subunit. Contacts protein L32.

The protein is Large ribosomal subunit protein bL17 of Legionella pneumophila (strain Lens).